The following is a 412-amino-acid chain: Probable serine/threonine-protein kinase PBL4 (412 aa).

Gly-2 carries N-myristoyl glycine lipidation. A lipid anchor (S-palmitoyl cysteine) is attached at Cys-4. The disordered stretch occupies residues 14–40; that stretch reads RESPYRGSSRISAKRSQSSRLSSLTIQ. Low complexity predominate over residues 21-40; sequence SSRISAKRSQSSRLSSLTIQ. The residue at position 72 (Thr-72) is a Phosphothreonine. Positions 83-369 constitute a Protein kinase domain; the sequence is FRPDSVIGEG…STLEELEMTL (287 aa). ATP-binding positions include 89 to 97 and Lys-121; that span reads IGEGGFGYV. The residue at position 167 (Tyr-167) is a Phosphotyrosine. Asp-215 (proton acceptor) is an active-site residue. Ser-219 and Ser-249 each carry phosphoserine. Thr-250 and Thr-255 each carry phosphothreonine. Tyr-263 bears the Phosphotyrosine mark.

It belongs to the protein kinase superfamily. Ser/Thr protein kinase family.

Its subcellular location is the cell membrane. It catalyses the reaction L-seryl-[protein] + ATP = O-phospho-L-seryl-[protein] + ADP + H(+). The catalysed reaction is L-threonyl-[protein] + ATP = O-phospho-L-threonyl-[protein] + ADP + H(+). Its function is as follows. May be involved in plant defense signaling. The sequence is that of Probable serine/threonine-protein kinase PBL4 from Arabidopsis thaliana (Mouse-ear cress).